A 613-amino-acid chain; its full sequence is Coiled-coil domain-containing protein 116 (613 aa).

The segment at 41 to 68 (KPGRVPHPPSTCGSSALQGQRRNKRHPQ) is disordered. Residues 51-60 (TCGSSALQGQ) show a composition bias toward polar residues. Positions 79–104 (ESQVLDSLETVVEKATERMAAMKTEA) form a coiled coil. Disordered regions lie at residues 329 to 395 (CRDG…AQVA), 509 to 541 (RQAS…QATE), and 565 to 613 (MSAC…EDGV). Ser-386 carries the post-translational modification Phosphoserine. Over residues 512–539 (SRLSTSHCSTETPSVQQEPATHTAQDQA) the composition is skewed to polar residues. Over residues 577 to 589 (KSKDMDNEGRDKA) the composition is skewed to basic and acidic residues. Positions 590-613 (EIEDEDEDEFKDEDQDEDKDEDGV) are enriched in acidic residues.

Its subcellular location is the cytoplasm. It is found in the cytoskeleton. The protein resides in the microtubule organizing center. It localises to the centrosome. This Homo sapiens (Human) protein is Coiled-coil domain-containing protein 116 (CCDC116).